Reading from the N-terminus, the 754-residue chain is MKVNLKLIIGSILISQAQAIWPFDSSGSSSSSDSSPSETGSSGGTFPFDLFGSGSSLTQSSSAQASSTKSTSDSASSTDSSLFSSSNSGSSWYQTFLDGDSGDQKTDYAPFNLTCPSKKTFIRTASELSQQEKDYIHKRQETTNKNLIDFLSKRANLSDFDAKSFINDNAPNHNITIGLSFSGGGYRAMLAGAGQILGLDGRYEDANKHGLGGLLDSSTYVVGLSGGNWLVGSLALNDWLSVGDIVNGKSTIWQLQDSILNPSGMRIDKTIAYYYGLAQAVQAKEDAGFQTSVTDTWGRALSYQFFEEDDSGTGGANITWSSIRNLSSFQDHSMPYPIVVANGRTPGTYIINENSTIFEISPYELGSWDPSLKSFSNIQYLGSSVNNGNPNNTDICVNNFDNAGFIMGTSSSLFNQILLQLDNYSINSIIKMILEKVLTDVSDEEYDIAVYEPNPFFGADSAGIKSITTNDTLYLCDGGEDLQNVPFYPLIQNKRGVDVIFAFDNSADTNSSWPNGTSIQETYKRQFSKQGKGTPFPFAPDYKTFLDKNMGDKPVFFGCNSSDLEDLVAWHENDKINVTDVPLVVYTSNTRMSYNSNFSTFKLSYSDQEKFGAIRNGFETVTRNNLTDDENWSTCVGCAIIRRQQERLGEEQSDECKKCFQEYCWTGGFKDAASVSSVSGISGLAAKTHTSGGTSSTTQQTSTTTGSSANGGSSSTGSSSSSKKKNGGDLVNGGVPSSIFLVFNSLLGLIIAYL.

Residues Met-1–Ala-19 form the signal peptide. 2 stretches are compositionally biased toward low complexity: residues Ser-25–Gly-40 and Leu-50–Ser-88. The disordered stretch occupies residues Ser-25–Ser-88. N-linked (GlcNAc...) asparagine glycosylation is found at Asn-112, Asn-156, Asn-174, Asn-317, Asn-325, Asn-354, Asn-391, Asn-423, Asn-470, Asn-510, Asn-515, Asn-560, Asn-577, Asn-597, Asn-625, and Asn-631. One can recognise a PLA2c domain in the interval Thr-114–Lys-670. Over residues Lys-687 to Ser-721 the composition is skewed to low complexity. A disordered region spans residues Lys-687–Gly-727.

This sequence belongs to the lysophospholipase family.

The protein localises to the secreted. It catalyses the reaction a 1-acyl-sn-glycero-3-phosphocholine + H2O = sn-glycerol 3-phosphocholine + a fatty acid + H(+). Its function is as follows. Catalyzes the release of fatty acids from lysophospholipids. Phospholipase B may well contribute to pathogenicity by abetting the fungus in damaging and traversing host cell membranes, processes which likely increase the rapidity of disseminated infection. This chain is Lysophospholipase 3 (PLB3), found in Candida albicans (Yeast).